The sequence spans 91 residues: MTRSAKKGPFCDAHLLKKVEVASSGKDKKPIKTWSRRSTILPEFIGLTIAVHNGRQHVPVYVTENMVGHKLGEFAITRTFKGHAADKKAKR.

Belongs to the universal ribosomal protein uS19 family.

Functionally, protein S19 forms a complex with S13 that binds strongly to the 16S ribosomal RNA. This Cupriavidus necator (strain ATCC 17699 / DSM 428 / KCTC 22496 / NCIMB 10442 / H16 / Stanier 337) (Ralstonia eutropha) protein is Small ribosomal subunit protein uS19.